A 354-amino-acid chain; its full sequence is Probable disease resistance protein At5g45490 (354 aa).

Residues 33-53 adopt a coiled-coil conformation; that stretch reads AKGNLEKKRDDNEEEERLKTE. One can recognise an NB-ARC domain in the interval 45-122; that stretch reads EEEERLKTES…VYAPRVWVSM (78 aa). 91–98 provides a ligand contact to ATP; that stretch reads GEYGVGKT. The interval 328–354 is disordered; that stretch reads DDEVGPVGSTHGQTDSSNRQPANQASS. Over residues 337 to 354 the composition is skewed to polar residues; sequence THGQTDSSNRQPANQASS.

Its function is as follows. Possible disease resistance protein. This chain is Probable disease resistance protein At5g45490, found in Arabidopsis thaliana (Mouse-ear cress).